The sequence spans 286 residues: ATP synthase gamma chain (286 aa).

It belongs to the ATPase gamma chain family. As to quaternary structure, F-type ATPases have 2 components, CF(1) - the catalytic core - and CF(0) - the membrane proton channel. CF(1) has five subunits: alpha(3), beta(3), gamma(1), delta(1), epsilon(1). CF(0) has three main subunits: a, b and c.

It is found in the cell inner membrane. In terms of biological role, produces ATP from ADP in the presence of a proton gradient across the membrane. The gamma chain is believed to be important in regulating ATPase activity and the flow of protons through the CF(0) complex. The sequence is that of ATP synthase gamma chain from Pseudomonas fluorescens (strain SBW25).